We begin with the raw amino-acid sequence, 286 residues long: ATP synthase gamma chain (286 aa).

It belongs to the ATPase gamma chain family. In terms of assembly, F-type ATPases have 2 components, CF(1) - the catalytic core - and CF(0) - the membrane proton channel. CF(1) has five subunits: alpha(3), beta(3), gamma(1), delta(1), epsilon(1). CF(0) has three main subunits: a, b and c.

It is found in the cell inner membrane. Its function is as follows. Produces ATP from ADP in the presence of a proton gradient across the membrane. The gamma chain is believed to be important in regulating ATPase activity and the flow of protons through the CF(0) complex. The chain is ATP synthase gamma chain from Pseudomonas putida (strain W619).